The sequence spans 332 residues: Ribosomal RNA small subunit methyltransferase C (332 aa).

This sequence belongs to the methyltransferase superfamily. RsmC family. As to quaternary structure, monomer.

The protein resides in the cytoplasm. The catalysed reaction is guanosine(1207) in 16S rRNA + S-adenosyl-L-methionine = N(2)-methylguanosine(1207) in 16S rRNA + S-adenosyl-L-homocysteine + H(+). Functionally, specifically methylates the guanine in position 1207 of 16S rRNA in the 30S particle. In Pseudomonas aeruginosa (strain LESB58), this protein is Ribosomal RNA small subunit methyltransferase C.